Reading from the N-terminus, the 507-residue chain is UDP-glycosyltransferase 73D1 (507 aa).

Residues S298, 359–361 (SPQ), 376–384 (HCGWNSTIE), and 398–401 (FAEQ) each bind UDP-alpha-D-glucose.

It belongs to the UDP-glycosyltransferase family.

The polypeptide is UDP-glycosyltransferase 73D1 (UGT73D1) (Arabidopsis thaliana (Mouse-ear cress)).